A 497-amino-acid chain; its full sequence is NAD(P)H-quinone oxidoreductase chain 4, chloroplastic (497 aa).

The next 14 membrane-spanning stretches (helical) occupy residues 5–25, 36–56, 88–108, 112–132, 135–155, 168–188, 212–232, 243–263, 275–295, 306–326, 331–351, 387–407, 418–438, and 463–483; these read VPWL…IPIL, YTLG…YCHF, LGLV…AWPI, TRLF…LFVS, ILLF…LLCL, FVLY…TMSF, VLIY…FPFH, HYST…YGLI, FLLG…ASLI, IAYS…SFTE, GAIL…FLAG, LALP…GVVT, GITV…LSML, and LFIL…PNLI.

The protein belongs to the complex I subunit 4 family.

It is found in the plastid. Its subcellular location is the chloroplast thylakoid membrane. The catalysed reaction is a plastoquinone + NADH + (n+1) H(+)(in) = a plastoquinol + NAD(+) + n H(+)(out). It catalyses the reaction a plastoquinone + NADPH + (n+1) H(+)(in) = a plastoquinol + NADP(+) + n H(+)(out). This is NAD(P)H-quinone oxidoreductase chain 4, chloroplastic from Adiantum capillus-veneris (Maidenhair fern).